Here is a 547-residue protein sequence, read N- to C-terminus: Chaperonin GroEL 2 (547 aa).

Residues 30-33 (TLGP), Lys-51, 87-91 (DGTTT), Gly-415, 479-481 (NAA), and Asp-495 each bind ATP. Residues 526 to 547 (KEESAAPAGGGMGGMGGMGGMM) form a disordered region. Gly residues predominate over residues 533-547 (AGGGMGGMGGMGGMM).

The protein belongs to the chaperonin (HSP60) family. Forms a cylinder of 14 subunits composed of two heptameric rings stacked back-to-back. Interacts with the co-chaperonin GroES.

It is found in the cytoplasm. The enzyme catalyses ATP + H2O + a folded polypeptide = ADP + phosphate + an unfolded polypeptide.. In terms of biological role, together with its co-chaperonin GroES, plays an essential role in assisting protein folding. The GroEL-GroES system forms a nano-cage that allows encapsulation of the non-native substrate proteins and provides a physical environment optimized to promote and accelerate protein folding. In Anaeromyxobacter sp. (strain Fw109-5), this protein is Chaperonin GroEL 2.